Reading from the N-terminus, the 83-residue chain is Putative cytochrome b5 B11H24.095 (83 aa).

The region spanning 2–78 (SQTFTKSQVA…GTKLKVGTLA (77 aa)) is the Cytochrome b5 heme-binding domain. Heme contacts are provided by His37 and His60.

This sequence belongs to the cytochrome b5 family.

The protein is Putative cytochrome b5 B11H24.095 of Neurospora crassa (strain ATCC 24698 / 74-OR23-1A / CBS 708.71 / DSM 1257 / FGSC 987).